We begin with the raw amino-acid sequence, 576 residues long: MNSQAWIQLAVFLALLMLLAWPLGRWLAAVAEGHLPQGLAPFCRVETALYRAAGIDAAVGMGWKAYALALLAFNALGALAVYALQRLQGGLPLNPQGLPGVGADSSLNTAVSFVSNTNWQGYAGETTMSYLTQMLALGVQNFLSAATGIAVAFALIRGFAARSSSAIGNFWVDVTRITVYVLLPLSLVFAVFLVSQGVIQNVQPYQDVSTLEGAASTPQTLAMGPVASQEAIKMIGTNGGGFFNANSAHPYENPTPLSNFAQMLAIFLIPAGLVFAFGRLVGDVRQGGALLAAMTVMFVLAVVTVTSLEQRGHPQLAALGVDPVASALQAGGNMEGKEARFGIAASALFAAITTAASCGAVNAMHDSFMPLGGAVPLLLIQLGEVVFGGVGSGLYGMLVFAILAVFIAGLMIGRTPEYLGKKIEPYEMKMTAVVILVTPLLALLGTAVALTAPTGPAGMGNPGPHGYTEILYALSSAANNNGSAFAGLSANTPFYNLLLAVAMWFGRFGVIVPVLAIAGSLAAKKRLPVTAGTLPTHGPLFVVLLIGAVLLVGLLNYVPALALGPVVEHLMQAAAR.

Transmembrane regions (helical) follow at residues 4–24 (QAWI…WPLG), 65–85 (AYAL…YALQ), 136–156 (ALGV…FALI), 179–199 (VYVL…QGVI), 257–277 (LSNF…VFAF), 288–308 (GALL…VTSL), 341–361 (FGIA…CGAV), 371–391 (LGGA…GGVG), 393–413 (GLYG…LMIG), 430–450 (MTAV…AVAL), 497–517 (LLLA…VLAI), and 540–560 (LFVV…YVPA).

Belongs to the KdpA family. In terms of assembly, the system is composed of three essential subunits: KdpA, KdpB and KdpC.

Its subcellular location is the cell inner membrane. Part of the high-affinity ATP-driven potassium transport (or Kdp) system, which catalyzes the hydrolysis of ATP coupled with the electrogenic transport of potassium into the cytoplasm. This subunit binds the periplasmic potassium ions and delivers the ions to the membrane domain of KdpB through an intramembrane tunnel. The sequence is that of Potassium-transporting ATPase potassium-binding subunit from Methylibium petroleiphilum (strain ATCC BAA-1232 / LMG 22953 / PM1).